A 1858-amino-acid polypeptide reads, in one-letter code: Protein ROS1C (1858 aa).

Positions 347 to 356 (TEALKGEDAP) are enriched in basic and acidic residues. Disordered regions lie at residues 347 to 416 (TEAL…AEPF) and 1288 to 1309 (PDTAAQASKPKKSRTTSKKNSE). 2 stretches are compositionally biased toward basic residues: residues 360–370 (LKTRRRKHRPK) and 394–404 (KPKRKYVRKNR). [4Fe-4S] cluster contacts are provided by Cys1492, Cys1499, Cys1502, and Cys1508.

It belongs to the DNA glycosylase family. DEMETER subfamily. [4Fe-4S] cluster is required as a cofactor. In terms of tissue distribution, expressed in pistils and immature seeds. Expressed a low levels in roots, leaves and anthers.

The protein localises to the nucleus. Bifunctional DNA glycosylase/lyase, which excises 5-methylcytosine (5-meC) and 5-hydroxymethylcytosine (5-hmeC), leaving an apyrimidinic (AP) site that is subsequently incised by the lyase activity. Is responsible for the demethylation of methylated cytosine residues of Tos17 retrotransposon DNA. Demethylation of Tos17 cytosine residues promotes its transposition. May be involved in seed development. The sequence is that of Protein ROS1C from Oryza sativa subsp. japonica (Rice).